Reading from the N-terminus, the 295-residue chain is Protoheme IX farnesyltransferase (295 aa).

The next 9 membrane-spanning stretches (helical) occupy residues 27 to 47, 48 to 68, 94 to 114, 117 to 137, 144 to 164, 171 to 191, 216 to 236, 241 to 261, and 272 to 292; these read LVVFTAIAGMVAAPGSIHPFL, ALISLMCIALGSGSAGAINMW, SALEFGITIGILSVFIMAIAV, ISAALLAVSILFYVFVYTIWL, NIVIGGAAGAFPPMIGWAVVT, SFILFLIIFMWTPPHFWALSL, KHILIYSILLVLTSLLPALFL, FYLSMAIIEGCVFIWFAISVI, and MFSYSISYLFSLFASIIFCSI.

This sequence belongs to the UbiA prenyltransferase family. Protoheme IX farnesyltransferase subfamily.

Its subcellular location is the cell membrane. It carries out the reaction heme b + (2E,6E)-farnesyl diphosphate + H2O = Fe(II)-heme o + diphosphate. It functions in the pathway porphyrin-containing compound metabolism; heme O biosynthesis; heme O from protoheme: step 1/1. In terms of biological role, converts heme B (protoheme IX) to heme O by substitution of the vinyl group on carbon 2 of heme B porphyrin ring with a hydroxyethyl farnesyl side group. This is Protoheme IX farnesyltransferase from Wolbachia pipientis subsp. Culex pipiens (strain wPip).